The following is a 141-amino-acid chain: Hemoglobin subunit alpha-D (141 aa).

The 141-residue stretch at 1-141 (MLTADDKKLI…VAAVLAEKYR (141 aa)) folds into the Globin domain. Positions 58 and 87 each coordinate heme b.

This sequence belongs to the globin family. As to quaternary structure, heterotetramer of two alpha-D chains and two beta chains. As to expression, red blood cells.

Functionally, involved in oxygen transport from the lung to the various peripheral tissues. The protein is Hemoglobin subunit alpha-D (HBAD) of Aegypius monachus (Cinereous vulture).